The sequence spans 340 residues: Nicotianamine synthase 9 (340 aa).

The protein belongs to the nicotianamine synthase (NAS)-like family. Homotrimer.

It catalyses the reaction 3 S-adenosyl-L-methionine = nicotianamine + 3 S-methyl-5'-thioadenosine + 3 H(+). Its function is as follows. Synthesizes nicotianamine, a polyamine that is the first intermediate in the synthesis of the phytosiderophores of the mugineic acid type found in gramineae which serves as a sensor for the physiological iron status within the plant, and/or might be involved in the transport of iron. The chain is Nicotianamine synthase 9 (NAS9) from Hordeum vulgare (Barley).